We begin with the raw amino-acid sequence, 304 residues long: Protease HtpX homolog (304 aa).

Transmembrane regions (helical) follow at residues 19 to 39 and 41 to 61; these read FIVF…VSYF and LGEI…YYAY. Residue His146 coordinates Zn(2+). Glu147 is an active-site residue. His150 contacts Zn(2+). 2 helical membrane passes run 156–176 and 192–212; these read VRLQ…GDGL and NILG…ATLL. Residue Glu221 coordinates Zn(2+).

This sequence belongs to the peptidase M48B family. It depends on Zn(2+) as a cofactor.

It localises to the cell inner membrane. The chain is Protease HtpX homolog from Dictyoglomus turgidum (strain DSM 6724 / Z-1310).